The sequence spans 436 residues: Bifunctional IPC transferase and DIPP synthase (436 aa).

Residues 11-241 form a mobA-like NTP transferase region; it reads GVGAAVLAAG…LSEEMVLGWA (231 aa). Residues 17–19 and Lys32 contribute to the CTP site; that span reads LAA. Residues 242–435 form a CDP-alcohol phosphatidyltransferases region; it reads ASGNDGPVSR…RRLLALKRGR (194 aa). A run of 3 helical transmembrane segments spans residues 275–295, 349–371, and 397–417; these read VSLLSFALAALGAGLLAAGRL, AGTRLAAAAGYPALAGALLVSYT, and LAVLALGGLLGAPGAALLATG.

It in the N-terminal section; belongs to the MobA family. In the C-terminal section; belongs to the CDP-alcohol phosphatidyltransferase class-I family.

The protein localises to the membrane. The enzyme catalyses 1D-myo-inositol 3-phosphate + CTP + H(+) = CDP-1L-myo-inositol + diphosphate. It carries out the reaction CDP-1L-myo-inositol + 1D-myo-inositol 3-phosphate = bis(1L-myo-inositol) 3,1'-phosphate 1-phosphate + CMP + H(+). Functionally, involved in biosynthesis of di-myo-inositol phosphate (DIP), a widespread organic solute in microorganisms adapted to hot environments. Catalyzes the condensation of CTP and L-myo-inositol-1-phosphate into CDP-L-myo-inositol, as well as the biosynthesis of di-myo-inositol-1,3'-phosphate-1'-phosphate (DIPP) from CDP-L-myo-inositol and L-myo-inositol-1-phosphate. In Rubrobacter xylanophilus (strain DSM 9941 / JCM 11954 / NBRC 16129 / PRD-1), this protein is Bifunctional IPC transferase and DIPP synthase.